A 183-amino-acid polypeptide reads, in one-letter code: Translation initiation factor IF-3 (183 aa).

Belongs to the IF-3 family. Monomer.

Its subcellular location is the cytoplasm. Its function is as follows. IF-3 binds to the 30S ribosomal subunit and shifts the equilibrium between 70S ribosomes and their 50S and 30S subunits in favor of the free subunits, thus enhancing the availability of 30S subunits on which protein synthesis initiation begins. The chain is Translation initiation factor IF-3 from Pseudomonas fluorescens (strain SBW25).